A 159-amino-acid polypeptide reads, in one-letter code: Transcriptional repressor NrdR (159 aa).

Over residues 1–11 (MQCPSCQNTDS) the composition is skewed to polar residues. The interval 1 to 20 (MQCPSCQNTDSRVLESRSAD) is disordered. Residues 3 to 34 (CPSCQNTDSRVLESRSADSGRSVRRRRECLNC) fold into a zinc finger. The ATP-cone domain maps to 49 to 139 (INVLKRSGAK…VYRQFNGIND (91 aa)).

This sequence belongs to the NrdR family. Requires Zn(2+) as cofactor.

In terms of biological role, negatively regulates transcription of bacterial ribonucleotide reductase nrd genes and operons by binding to NrdR-boxes. This is Transcriptional repressor NrdR from Prochlorococcus marinus (strain NATL1A).